The chain runs to 175 residues: Sec-independent protein translocase protein TatB (175 aa).

Residues 1 to 21 (MLDLGLSKMALIGVVALVVLG) traverse the membrane as a helical segment. The interval 155–175 (SGAARVARHQPASLRRPTRFF) is disordered.

It belongs to the TatB family. The Tat system comprises two distinct complexes: a TatABC complex, containing multiple copies of TatA, TatB and TatC subunits, and a separate TatA complex, containing only TatA subunits. Substrates initially bind to the TatABC complex, which probably triggers association of the separate TatA complex to form the active translocon.

The protein resides in the cell inner membrane. Functionally, part of the twin-arginine translocation (Tat) system that transports large folded proteins containing a characteristic twin-arginine motif in their signal peptide across membranes. Together with TatC, TatB is part of a receptor directly interacting with Tat signal peptides. TatB may form an oligomeric binding site that transiently accommodates folded Tat precursor proteins before their translocation. This chain is Sec-independent protein translocase protein TatB, found in Burkholderia lata (strain ATCC 17760 / DSM 23089 / LMG 22485 / NCIMB 9086 / R18194 / 383).